A 110-amino-acid polypeptide reads, in one-letter code: U1-lycotoxin-Ls1cc (110 aa).

Residues 1–20 form the signal peptide; that stretch reads MKFVLLFGVLLVTLFSYSSA. Positions 21 to 44 are excised as a propeptide; that stretch reads EMLDDFDQADEDELLSLIEKEEAR. Cystine bridges form between C47/C62, C54/C71, C61/C89, and C73/C87.

Belongs to the neurotoxin 19 (CSTX) family. 03 subfamily. In terms of tissue distribution, expressed by the venom gland.

Its subcellular location is the secreted. The protein is U1-lycotoxin-Ls1cc of Lycosa singoriensis (Wolf spider).